A 358-amino-acid chain; its full sequence is Anhydro-N-acetylmuramic acid kinase (358 aa).

9–16 is a binding site for ATP; the sequence is GTSLDGVD.

Belongs to the anhydro-N-acetylmuramic acid kinase family.

It carries out the reaction 1,6-anhydro-N-acetyl-beta-muramate + ATP + H2O = N-acetyl-D-muramate 6-phosphate + ADP + H(+). The protein operates within amino-sugar metabolism; 1,6-anhydro-N-acetylmuramate degradation. Its pathway is cell wall biogenesis; peptidoglycan recycling. Its function is as follows. Catalyzes the specific phosphorylation of 1,6-anhydro-N-acetylmuramic acid (anhMurNAc) with the simultaneous cleavage of the 1,6-anhydro ring, generating MurNAc-6-P. Is required for the utilization of anhMurNAc either imported from the medium or derived from its own cell wall murein, and thus plays a role in cell wall recycling. The protein is Anhydro-N-acetylmuramic acid kinase of Acidiphilium cryptum (strain JF-5).